Reading from the N-terminus, the 130-residue chain is Small ribosomal subunit protein uS8 (130 aa).

Belongs to the universal ribosomal protein uS8 family. Part of the 30S ribosomal subunit. Contacts proteins S5 and S12.

Its function is as follows. One of the primary rRNA binding proteins, it binds directly to 16S rRNA central domain where it helps coordinate assembly of the platform of the 30S subunit. The chain is Small ribosomal subunit protein uS8 from Ectopseudomonas mendocina (strain ymp) (Pseudomonas mendocina).